A 124-amino-acid polypeptide reads, in one-letter code: Small ribosomal subunit protein uS12 (124 aa).

Asp89 is modified (3-methylthioaspartic acid). A disordered region spans residues 104–124 (ALGVEDRKRGRSKYGAKRPKA). Basic residues predominate over residues 112 to 124 (RGRSKYGAKRPKA).

The protein belongs to the universal ribosomal protein uS12 family. As to quaternary structure, part of the 30S ribosomal subunit. Contacts proteins S8 and S17. May interact with IF1 in the 30S initiation complex.

Its function is as follows. With S4 and S5 plays an important role in translational accuracy. Interacts with and stabilizes bases of the 16S rRNA that are involved in tRNA selection in the A site and with the mRNA backbone. Located at the interface of the 30S and 50S subunits, it traverses the body of the 30S subunit contacting proteins on the other side and probably holding the rRNA structure together. The combined cluster of proteins S8, S12 and S17 appears to hold together the shoulder and platform of the 30S subunit. The protein is Small ribosomal subunit protein uS12 of Treponema denticola (strain ATCC 35405 / DSM 14222 / CIP 103919 / JCM 8153 / KCTC 15104).